Here is a 230-residue protein sequence, read N- to C-terminus: V-type proton ATPase subunit E (230 aa).

It belongs to the V-ATPase E subunit family. V-ATPase is a heteromultimeric enzyme composed of a peripheral catalytic V1 complex (components A to H) attached to an integral membrane V0 proton pore complex (components: a, c, c', c'' and d).

In terms of biological role, subunit of the peripheral V1 complex of vacuolar ATPase essential for assembly or catalytic function. V-ATPase is responsible for acidifying a variety of intracellular compartments in eukaryotic cells. The sequence is that of V-type proton ATPase subunit E (VATE) from Citrus unshiu (Satsuma mandarin).